The primary structure comprises 487 residues: N-succinylglutamate 5-semialdehyde dehydrogenase (487 aa).

The disordered stretch occupies residues M1–A23. An NAD(+)-binding site is contributed by G220–G225. Residues E243 and C277 contribute to the active site.

Belongs to the aldehyde dehydrogenase family. AstD subfamily.

It catalyses the reaction N-succinyl-L-glutamate 5-semialdehyde + NAD(+) + H2O = N-succinyl-L-glutamate + NADH + 2 H(+). It functions in the pathway amino-acid degradation; L-arginine degradation via AST pathway; L-glutamate and succinate from L-arginine: step 4/5. Functionally, catalyzes the NAD-dependent reduction of succinylglutamate semialdehyde into succinylglutamate. This chain is N-succinylglutamate 5-semialdehyde dehydrogenase, found in Shewanella sp. (strain ANA-3).